Reading from the N-terminus, the 965-residue chain is Sarcosine oxidase subunit alpha (965 aa).

NAD(+) is bound by residues Ala-139, Asp-158, Glu-159, Arg-160, Thr-166, Val-205, Ala-418, Leu-423, and Thr-425. Positions 692 and 784 each coordinate (6R)-5,10-methylene-5,6,7,8-tetrahydrofolate.

It belongs to the GcvT family. Heterotetramer composed of subunits alpha (SoxA), beta (SoxB), gamma (SoxG) and delta (SoxD). It depends on NAD(+) as a cofactor.

The protein localises to the cytoplasm. It carries out the reaction sarcosine + (6S)-5,6,7,8-tetrahydrofolate + O2 = (6R)-5,10-methylene-5,6,7,8-tetrahydrofolate + glycine + H2O2. The catalysed reaction is sarcosine + O2 + H2O = formaldehyde + glycine + H2O2. Its activity is regulated as follows. Inhibited by Zn(2+), Cu(2+), Cd(2+), Hg(2+), Ag(+), p-chloromercuribenzoate (p-CMB), iodoacetamide, N-ethylmaleimide, CN(-), o-phenanthroline and sodium lauryl sulfate. Its function is as follows. In the presence of tetrahydrofolate, catalyzes the oxidative demethylation of sarcosine to yield glycine, 5,10-methylenetetrahydrofolate and hydrogen peroxide. In the absence of tetrahydrofolate, catalyzes the oxidative demethylation of sarcosine to yield glycine, formaldehyde and hydrogen peroxide. Can also use N-methyl-L-alanine and N-ethyl-L-glycine. Is very specific for oxygen as an acceptor. The chain is Sarcosine oxidase subunit alpha from Corynebacterium sp. (strain U-96).